A 107-amino-acid chain; its full sequence is Conantokin-R (107 aa).

An N-terminal signal peptide occupies residues 1-24 (MQLYTYLYLLVSLVTFYLILGTGT). The propeptide occupies 25–80 (LGHGGALTERRSTDATALKPEPVLLQKSSARSTDDNGNDRLTQMKRILKKRGNKAR). The disordered stretch occupies residues 26 to 64 (GHGGALTERRSTDATALKPEPVLLQKSSARSTDDNGNDR). 4-carboxyglutamate occurs at positions 83, 84, 91, and 95. A divalent metal cation is bound by residues Glu-91 and Glu-95. A disulfide bridge links Cys-101 with Cys-105.

This sequence belongs to the conotoxin B superfamily. The cofactor is Ca(2+). It depends on Mg(2+) as a cofactor. As to expression, expressed by the venom duct.

Its subcellular location is the secreted. In terms of biological role, conantokins inhibit N-methyl-D-aspartate (NMDA) receptors. This toxin is potent in the following order of preference: NR2B approximately NR2A/GRIN2A &gt; NR2C/GRIN2C &gt;&gt; NR2D/GRIN2D. Induces sleep-like symptoms in young mice. Is a highly potent anticonvulsant compound. This Conus radiatus (Rayed cone) protein is Conantokin-R.